The chain runs to 379 residues: Chaperone protein DnaJ (379 aa).

Residues 5–70 (DYYEVLGVSR…QKRAAYDQYG (66 aa)) form the J domain. Residues 134–212 (GVTKEIRIPT…CHGHGRVEKS (79 aa)) form a CR-type zinc finger. Residues Cys147, Cys150, Cys164, Cys167, Cys186, Cys189, Cys200, and Cys203 each contribute to the Zn(2+) site. 4 CXXCXGXG motif repeats span residues 147-154 (CDVCHGSG), 164-171 (CPTCHGAG), 186-193 (CPHCHGRG), and 200-207 (CNKCHGHG).

It belongs to the DnaJ family. In terms of assembly, homodimer. The cofactor is Zn(2+).

The protein localises to the cytoplasm. Functionally, participates actively in the response to hyperosmotic and heat shock by preventing the aggregation of stress-denatured proteins and by disaggregating proteins, also in an autonomous, DnaK-independent fashion. Unfolded proteins bind initially to DnaJ; upon interaction with the DnaJ-bound protein, DnaK hydrolyzes its bound ATP, resulting in the formation of a stable complex. GrpE releases ADP from DnaK; ATP binding to DnaK triggers the release of the substrate protein, thus completing the reaction cycle. Several rounds of ATP-dependent interactions between DnaJ, DnaK and GrpE are required for fully efficient folding. Also involved, together with DnaK and GrpE, in the DNA replication of plasmids through activation of initiation proteins. The protein is Chaperone protein DnaJ of Yersinia pseudotuberculosis serotype O:1b (strain IP 31758).